The primary structure comprises 455 residues: Cerebellar degeneration-related protein 2 (455 aa).

Coiled coils occupy residues 37–141 (LLDR…SSQG) and 191–264 (EEEN…QAEH). Polar residues predominate over residues 132 to 142 (VEELKSSSQGR). Residues 132-152 (VEELKSSSQGRGRQKACDQEK) are disordered. S310 carries the phosphoserine modification. The disordered stretch occupies residues 395–419 (SEAGASGWEPTPVSPESISSPTTTP). The segment covering 403–419 (EPTPVSPESISSPTTTP) has biased composition (low complexity).

It belongs to the CDR2 family. In terms of tissue distribution, expressed in brain and testis (at protein level). Expressed in the cerebellum, cerebral cortex, heart, lung, spleen, ovary, kidney and testis.

In Mus musculus (Mouse), this protein is Cerebellar degeneration-related protein 2 (Cdr2).